A 137-amino-acid chain; its full sequence is uncharacterized protein (137 aa).

2 helical membrane passes run 26–42 (CSLC…FFAM) and 52–69 (ASIP…GSIL).

The protein localises to the membrane. This is an uncharacterized protein from Saccharomyces cerevisiae (strain ATCC 204508 / S288c) (Baker's yeast).